A 610-amino-acid chain; its full sequence is DNA replication regulator sld2 (610 aa).

Residues 28–42 (WAQKNDGKKPSREAI) are compositionally biased toward basic and acidic residues. Disordered regions lie at residues 28 to 115 (WAQK…AVHE), 127 to 261 (SPAV…ERSV), and 338 to 610 (EQGG…RRRR). Polar residues-rich tracts occupy residues 86–110 (ETSL…SQHY) and 232–261 (TKTS…ERSV). Composition is skewed to acidic residues over residues 373–386 (VPEE…DEAA) and 414–428 (FDDE…EEDL). The span at 442–464 (VFKKKGQKRTTRKVNMRPTRTKR) shows a compositional bias: basic residues. The span at 470–480 (AEEEDDGEEEH) shows a compositional bias: acidic residues. Basic and acidic residues predominate over residues 493-503 (KNLDGDDHHTL). The span at 514–527 (EFDDGSEGEDEEAE) shows a compositional bias: acidic residues. Positions 544 to 573 (SAKEKTKKDATTETKKKKGTKEGGDEEPAK) are enriched in basic and acidic residues.

It belongs to the SLD2 family.

Its subcellular location is the cytoplasm. It is found in the nucleus. In terms of biological role, has a role in the initiation of DNA replication. Required at S-phase checkpoint. This Neurospora crassa (strain ATCC 24698 / 74-OR23-1A / CBS 708.71 / DSM 1257 / FGSC 987) protein is DNA replication regulator sld2 (drc-4).